The following is a 198-amino-acid chain: Large ribosomal subunit protein uL5 (198 aa).

Belongs to the universal ribosomal protein uL5 family. As to quaternary structure, part of the 50S ribosomal subunit; part of the 5S rRNA/L5/L18/L25 subcomplex. Contacts the 5S rRNA and the P site tRNA. Forms a bridge to the 30S subunit in the 70S ribosome.

Its function is as follows. This is one of the proteins that bind and probably mediate the attachment of the 5S RNA into the large ribosomal subunit, where it forms part of the central protuberance. In the 70S ribosome it contacts protein S13 of the 30S subunit (bridge B1b), connecting the 2 subunits; this bridge is implicated in subunit movement. Contacts the P site tRNA; the 5S rRNA and some of its associated proteins might help stabilize positioning of ribosome-bound tRNAs. This Chlorobium phaeovibrioides (strain DSM 265 / 1930) (Prosthecochloris vibrioformis (strain DSM 265)) protein is Large ribosomal subunit protein uL5.